We begin with the raw amino-acid sequence, 219 residues long: Glutathione S-transferase U19 (219 aa).

The region spanning 3–82 is the GST N-terminal domain; the sequence is NEVILLDFWP…YIDEVWSHKN (80 aa). Glutathione contacts are provided by residues 13-14, 39-40, 53-54, and 66-67; these read SM, NK, KI, and ES. In terms of domain architecture, GST C-terminal spans 88 to 208; the sequence is DPYLRAQARF…LPDPEKVTEF (121 aa). Position 198 is a phosphoserine (Ser198).

The protein belongs to the GST superfamily. Tau family.

The protein localises to the cytoplasm. The protein resides in the cytosol. The enzyme catalyses RX + glutathione = an S-substituted glutathione + a halide anion + H(+). Catalyzes the glutathionylation of 12-oxophytodienoate (OPDA). In vitro, possesses glutathione S-transferase activity toward 1-chloro-2,4-dinitrobenzene (CDNB) and benzyl isothiocyanate (BITC), and glutathione peroxidase activity toward cumene hydroperoxide. This is Glutathione S-transferase U19 (GSTU19) from Arabidopsis thaliana (Mouse-ear cress).